Here is a 365-residue protein sequence, read N- to C-terminus: Cobalt-precorrin-5B C(1)-methyltransferase (365 aa).

This sequence belongs to the CbiD family.

It carries out the reaction Co-precorrin-5B + S-adenosyl-L-methionine = Co-precorrin-6A + S-adenosyl-L-homocysteine. It participates in cofactor biosynthesis; adenosylcobalamin biosynthesis; cob(II)yrinate a,c-diamide from sirohydrochlorin (anaerobic route): step 6/10. Functionally, catalyzes the methylation of C-1 in cobalt-precorrin-5B to form cobalt-precorrin-6A. The sequence is that of Cobalt-precorrin-5B C(1)-methyltransferase from Clostridium perfringens (strain ATCC 13124 / DSM 756 / JCM 1290 / NCIMB 6125 / NCTC 8237 / Type A).